The following is a 152-amino-acid chain: MFDILVYLFENYYTPQACPAADVLAKRLAAAGFEHEDIDDALGWLYGLAETTERCVELAQAPASGFRVYTDAEYQQLGSASIGFITFLESAGVLPAPLREIVIDRALASPEAPVSLSKIKIIALMVLWSQEAEIDNLVLEELLDDEEARRLH.

The protein belongs to the Smg family.

The chain is Protein Smg homolog from Bordetella avium (strain 197N).